We begin with the raw amino-acid sequence, 370 residues long: Cobalt-precorrin-5B C(1)-methyltransferase (370 aa).

This sequence belongs to the CbiD family.

It catalyses the reaction Co-precorrin-5B + S-adenosyl-L-methionine = Co-precorrin-6A + S-adenosyl-L-homocysteine. It functions in the pathway cofactor biosynthesis; adenosylcobalamin biosynthesis; cob(II)yrinate a,c-diamide from sirohydrochlorin (anaerobic route): step 6/10. In terms of biological role, catalyzes the methylation of C-1 in cobalt-precorrin-5B to form cobalt-precorrin-6A. This is Cobalt-precorrin-5B C(1)-methyltransferase from Nostoc sp. (strain PCC 7120 / SAG 25.82 / UTEX 2576).